A 296-amino-acid chain; its full sequence is Undecaprenyl-diphosphatase (296 aa).

The next 7 membrane-spanning stretches (helical) occupy residues 48–68 (SAFT…AWVF), 104–124 (LTLW…LLFD), 131–151 (LFSV…MIFA), 167–187 (ITFF…WPGF), 208–228 (SDFT…LSLV), 237–257 (SHIP…LLSI), and 272–292 (FAIY…GFGI).

The protein belongs to the UppP family.

It is found in the cell membrane. The enzyme catalyses di-trans,octa-cis-undecaprenyl diphosphate + H2O = di-trans,octa-cis-undecaprenyl phosphate + phosphate + H(+). Catalyzes the dephosphorylation of undecaprenyl diphosphate (UPP). Confers resistance to bacitracin. The protein is Undecaprenyl-diphosphatase of Staphylococcus carnosus (strain TM300).